Reading from the N-terminus, the 72-residue chain is C-hordein (72 aa).

Positions 1–36 are enriched in pro residues; sequence FPQPQEPFPQQPQQPFPLQPQQPFPQQPQQPFPQPQ. Residues 1-61 are disordered; sequence FPQPQEPFPQ…QQPFPLQPHQ (61 aa). The segment covering 37–50 has biased composition (low complexity); the sequence is QPFRQQAELIIPQQ.

In terms of tissue distribution, developing endosperm.

Its function is as follows. Sulfur-poor seed storage protein. In Hordeum vulgare (Barley), this protein is C-hordein.